A 220-amino-acid polypeptide reads, in one-letter code: 7-cyano-7-deazaguanine synthase (220 aa).

Phe-10 to Leu-20 is a binding site for ATP. Positions 186, 195, 198, and 201 each coordinate Zn(2+).

It belongs to the QueC family. As to quaternary structure, homodimer. Zn(2+) is required as a cofactor.

The catalysed reaction is 7-carboxy-7-deazaguanine + NH4(+) + ATP = 7-cyano-7-deazaguanine + ADP + phosphate + H2O + H(+). It functions in the pathway purine metabolism; 7-cyano-7-deazaguanine biosynthesis. Catalyzes the ATP-dependent conversion of 7-carboxy-7-deazaguanine (CDG) to 7-cyano-7-deazaguanine (preQ(0)). The polypeptide is 7-cyano-7-deazaguanine synthase (Bacillus mycoides (strain KBAB4) (Bacillus weihenstephanensis)).